The chain runs to 401 residues: MDPEVSKLLATVTSLGETVKKHASTDKESPASRESRRELLSAARQLTNELQNEGQIVEGYLYGTIDPLLLKMGIDLGIFRKLVDSSTPVTLGELMSVSGADEVLLARIMRGLSSIHAVREVGVELYEPNKVTRAFTTVKGQSGLDVFHNINHPGWQSLPECLRATGYRNPTDPAKMWFGRQFNGEPYFDWLGKRPELLSSFHRFMSTQRDGHAHWLDFYPFQQQLLPDFDAGDPDAVFMVDVGGSVGHEIQEVKRRYPGIPGRMVLQDVPATIARVDPENGMEAMAHDFFTPNPIKGARAYYLRNVLHDWDDDRCCVILKHIRDAMTPGYSVLLINEFSIPRKGACSFATHSDFMLMAINAAVERTEQQWYHLMKSVGLQIKKIWTLEPDTESLLEVTRVD.

Residue D268 coordinates S-adenosyl-L-methionine. Residue H308 is the Proton acceptor of the active site.

This sequence belongs to the class I-like SAM-binding methyltransferase superfamily. Cation-independent O-methyltransferase family.

It functions in the pathway secondary metabolite biosynthesis; flavonoid biosynthesis. Methyltransferase; part of the gene cluster that mediates the biosynthesis of chlorflavonin, a fungal flavonoid with acetolactate synthase inhibitory activity. Within the pathway, cfoC is responsible for the methylation at position C8-OH of flavonoid. The pathway begins with the PKS-NRPS hybrid synthetase cfoA that uses benzoic acid or p-hydroxybenzoic acid as a starter unit with four rounds of chain elongation using malonyl-CoA to form the chalcone skeleton. Then, a new type of chalcone isomerase, cfoK, catalyzes the conversion of the chalcone into a flavanone by a histidine-mediated oxa-Michael addition mechanism. The desaturation of flavanone to flavone is catalyzed by a new type of flavone synthase, the flavin mononucleotide (FMN)-dependent oxidoreductase cfoJ. Monooxygenases cfoF, cfoG, and P450 cfoH are responsible for the hydroxylation of the flavonoid skeleton at sites C3, C8, and C2', respectively. Like cfoF, the dehydratase cfoI also plays a role in the hydroxylation of position C3. Methyltransferases cfoB, cfoC, and cfoD then catalyze the methylation of C7-OH, C8-OH, and C3-OH, respectively. Finally, the monooxygenase cfoE is responsible for the chlorination of flavonoid at position C3'. The sequence is that of Methyltransferase cfoC from Aspergillus candidus.